Consider the following 164-residue polypeptide: Peptidyl-prolyl cis-trans isomerase A-like 4C (164 aa).

The 157-residue stretch at 7 to 163 (FFDITVDGKP…KKITIADCGQ (157 aa)) folds into the PPIase cyclophilin-type domain.

This sequence belongs to the cyclophilin-type PPIase family. PPIase A subfamily.

It localises to the cytoplasm. The catalysed reaction is [protein]-peptidylproline (omega=180) = [protein]-peptidylproline (omega=0). Its function is as follows. PPIases accelerate the folding of proteins. It catalyzes the cis-trans isomerization of proline imidic peptide bonds in oligopeptides. The polypeptide is Peptidyl-prolyl cis-trans isomerase A-like 4C (Homo sapiens (Human)).